The chain runs to 416 residues: Dihydroorotase (416 aa).

Residues His-53 and His-55 each coordinate Zn(2+). Residues 55 to 57 (HLR) and Asn-87 contribute to the substrate site. Zn(2+) contacts are provided by Asp-145, His-172, His-225, and Asp-298. The active site involves Asp-298. Residue His-302 coordinates substrate.

It belongs to the metallo-dependent hydrolases superfamily. DHOase family. Class I DHOase subfamily. Zn(2+) is required as a cofactor.

The enzyme catalyses (S)-dihydroorotate + H2O = N-carbamoyl-L-aspartate + H(+). Its pathway is pyrimidine metabolism; UMP biosynthesis via de novo pathway; (S)-dihydroorotate from bicarbonate: step 3/3. In terms of biological role, catalyzes the reversible cyclization of carbamoyl aspartate to dihydroorotate. The chain is Dihydroorotase from Deinococcus radiodurans (strain ATCC 13939 / DSM 20539 / JCM 16871 / CCUG 27074 / LMG 4051 / NBRC 15346 / NCIMB 9279 / VKM B-1422 / R1).